Consider the following 371-residue polypeptide: uncharacterized protein (371 aa).

Transmembrane regions (helical) follow at residues 4–24 (LPMLWFFFCVTVLIIGYFIYG), 60–82 (LIQLLNIAGTGPIFGPILGALYG), 87–109 (LWIVIGCIFAGAVHDYFCGMLSI), 130–150 (VFINTLALVLLLLVGVVFVAS), 197–217 (VVAVWTAIIFAYYILATLLPV), 224–244 (IYPLFGALLLFMSVGMVYGLV), 282–302 (VPIWPLLFLTISCGALSGFHA), and 320–340 (FIFYGAMITEGVIALVWCMVG).

Belongs to the peptide transporter carbon starvation (CstA) (TC 2.A.114) family.

Its subcellular location is the cell membrane. This is an uncharacterized protein from Haemophilus influenzae (strain ATCC 51907 / DSM 11121 / KW20 / Rd).